The primary structure comprises 140 residues: Large ribosomal subunit protein bL17 (140 aa).

Belongs to the bacterial ribosomal protein bL17 family. Part of the 50S ribosomal subunit. Contacts protein L32.

This Rhizobium leguminosarum bv. trifolii (strain WSM2304) protein is Large ribosomal subunit protein bL17.